Here is a 305-residue protein sequence, read N- to C-terminus: MLDISIQELIKQWQKYLILQRNYSNNTVIAYNNDLKHFLEFMNYYNSELVTINHIKTVDIRLIRSWLAKRKYENFTASSIARGLSTVKNFYKFLEKTILLNSHIIFSIKSPKKAKLLPKALSVDDVLISLEHIEGYGNVKWVELRNKALLVLIYAAGLRISEALSITKLHLQNLEFIKIIGKGSKERIIPWLPFARNLITKYLGILPYKLDENEPIFRGKHGKKLQPSVFNRELIKLKRVYGLPEYLTAHSFRHSFASHLLEYGADLRSIQELLGHKSLSTTQKYTQTSIKHLEAVYNTAYPIKK.

Residues 4-95 enclose the Core-binding (CB) domain; sequence ISIQELIKQW…TVKNFYKFLE (92 aa). Positions 116–298 constitute a Tyr recombinase domain; the sequence is LLPKALSVDD…SIKHLEAVYN (183 aa). Residues arginine 159, lysine 182, histidine 250, arginine 253, and histidine 276 contribute to the active site. Residue tyrosine 285 is the O-(3'-phospho-DNA)-tyrosine intermediate of the active site.

It belongs to the 'phage' integrase family. XerC subfamily. In terms of assembly, forms a cyclic heterotetrameric complex composed of two molecules of XerC and two molecules of XerD.

It localises to the cytoplasm. Functionally, site-specific tyrosine recombinase, which acts by catalyzing the cutting and rejoining of the recombining DNA molecules. The XerC-XerD complex is essential to convert dimers of the bacterial chromosome into monomers to permit their segregation at cell division. It also contributes to the segregational stability of plasmids. This is Tyrosine recombinase XerC from Rickettsia typhi (strain ATCC VR-144 / Wilmington).